The following is a 173-amino-acid chain: Large ribosomal subunit protein uL16 (173 aa).

Belongs to the universal ribosomal protein uL16 family.

This chain is Large ribosomal subunit protein uL16, found in Methanosphaerula palustris (strain ATCC BAA-1556 / DSM 19958 / E1-9c).